Consider the following 926-residue polypeptide: Piwi-like protein Ago3 (926 aa).

Residues 1-62 (MADPGKGRGR…PSTSGVSIGG (62 aa)) form a disordered region. A compositionally biased stretch (low complexity) spans 26-56 (SPSQSESQSPESTPEQSTAPSTIASATPSTS). One can recognise a PAZ domain in the interval 339 to 455 (TVLSLIKEVV…LIPELCQLTG (117 aa)). In terms of domain architecture, Piwi spans 620–912 (LVVAICSTKR…LSYLVGQCVH (293 aa)). Gln-672 is a binding site for Mg(2+). Residues Asp-697, Glu-735, Asp-767, and His-901 contribute to the active site. Leu-926 is a binding site for Mg(2+).

The protein belongs to the argonaute family. Piwi subfamily. As to quaternary structure, interacts (when symmetrically methylated) with Papi/TDRKH. Interacts with Vasa. The cofactor is Mg(2+). In terms of processing, arginine methylation is required for the interaction with Tudor domain-containing protein Papi/TDRKH. As to expression, highly expressed in the larval testis, pupal ovary and adult eggs.

Its subcellular location is the cytoplasm. In terms of biological role, endoribonuclease that plays a central role during spermatogenesis by repressing transposable elements and preventing their mobilization, which is essential for the germline integrity. Plays an essential role in meiotic differentiation of spermatocytes, germ cell differentiation and in self-renewal of spermatogonial stem cells. Its presence in oocytes suggests that it may participate in similar functions during oogenesis in females. Acts via the piRNA metabolic process, which mediates the repression of transposable elements during meiosis by forming complexes composed of piRNAs and Piwi proteins and govern the methylation and subsequent repression of transposons. Directly binds piRNAs, a class of 24 to 30 nucleotide RNAs that are generated by a Dicer-independent mechanism and are primarily derived from transposons and other repeated sequence elements. Strongly prefers a have adenine at position 10 of their guide (g10A preference). Plays a key role in the piRNA amplification loop, also named ping-pong amplification cycle: antisense piRNA-bound Siwi and sense piRNA-bound Ago3 reciprocally cleave complementary transcripts, to couple the amplification of piRNAs with the repression of transposable elements. The polypeptide is Piwi-like protein Ago3 (AGO3) (Bombyx mori (Silk moth)).